The sequence spans 216 residues: 3-isopropylmalate dehydratase small subunit (216 aa).

This sequence belongs to the LeuD family. LeuD type 1 subfamily. As to quaternary structure, heterodimer of LeuC and LeuD.

The catalysed reaction is (2R,3S)-3-isopropylmalate = (2S)-2-isopropylmalate. Its pathway is amino-acid biosynthesis; L-leucine biosynthesis; L-leucine from 3-methyl-2-oxobutanoate: step 2/4. Catalyzes the isomerization between 2-isopropylmalate and 3-isopropylmalate, via the formation of 2-isopropylmaleate. This Polaromonas naphthalenivorans (strain CJ2) protein is 3-isopropylmalate dehydratase small subunit.